Consider the following 743-residue polypeptide: 1,4-alpha-glucan branching enzyme GlgB (743 aa).

The active-site Nucleophile is the aspartate 423. The active-site Proton donor is glutamate 476.

Belongs to the glycosyl hydrolase 13 family. GlgB subfamily. As to quaternary structure, monomer.

The enzyme catalyses Transfers a segment of a (1-&gt;4)-alpha-D-glucan chain to a primary hydroxy group in a similar glucan chain.. It participates in glycan biosynthesis; glycogen biosynthesis. Functionally, catalyzes the formation of the alpha-1,6-glucosidic linkages in glycogen by scission of a 1,4-alpha-linked oligosaccharide from growing alpha-1,4-glucan chains and the subsequent attachment of the oligosaccharide to the alpha-1,6 position. The sequence is that of 1,4-alpha-glucan branching enzyme GlgB from Pseudomonas fluorescens (strain ATCC BAA-477 / NRRL B-23932 / Pf-5).